The primary structure comprises 658 residues: Exoribonuclease 2 (658 aa).

Residues 189 to 530 (REDLTSLYFT…VNHRLIKQVL (342 aa)) enclose the RNB domain. Residues 576-658 (AVEFDCEIAD…ETRSIVGNII (83 aa)) enclose the S1 motif domain.

It belongs to the RNR ribonuclease family. RNase II subfamily.

The protein resides in the cytoplasm. It catalyses the reaction Exonucleolytic cleavage in the 3'- to 5'-direction to yield nucleoside 5'-phosphates.. Its function is as follows. Involved in mRNA degradation. Hydrolyzes single-stranded polyribonucleotides processively in the 3' to 5' direction. This Actinobacillus pleuropneumoniae serotype 7 (strain AP76) protein is Exoribonuclease 2.